Consider the following 514-residue polypeptide: Maturase K (514 aa).

Belongs to the intron maturase 2 family. MatK subfamily.

It localises to the plastid. The protein localises to the chloroplast. In terms of biological role, usually encoded in the trnK tRNA gene intron. Probably assists in splicing its own and other chloroplast group II introns. The protein is Maturase K of Tsuga canadensis (Eastern hemlock).